Consider the following 209-residue polypeptide: HTH-type transcriptional repressor BepR (209 aa).

The region spanning 9–69 (AETREAILLA…SIIGRARFPQ (61 aa)) is the HTH tetR-type domain. The segment at residues 32-51 (TLTEIACYAGVTRGAIYFHF) is a DNA-binding region (H-T-H motif).

Its function is as follows. Represses expression of bepDE. In Brucella suis biovar 1 (strain 1330), this protein is HTH-type transcriptional repressor BepR (bepR).